A 235-amino-acid polypeptide reads, in one-letter code: Large ribosomal subunit protein uL1 (235 aa).

This sequence belongs to the universal ribosomal protein uL1 family. In terms of assembly, part of the 50S ribosomal subunit.

Its function is as follows. Binds directly to 23S rRNA. The L1 stalk is quite mobile in the ribosome, and is involved in E site tRNA release. In terms of biological role, protein L1 is also a translational repressor protein, it controls the translation of the L11 operon by binding to its mRNA. The chain is Large ribosomal subunit protein uL1 from Thermobifida fusca (strain YX).